Here is a 26-residue protein sequence, read N- to C-terminus: Photosystem II stability/assembly factor HCF136, chloroplastic (26 aa).

This sequence belongs to the Ycf48 family.

It localises to the plastid. Its subcellular location is the chloroplast thylakoid lumen. Its function is as follows. Essential for photosystem II (PSII) biogenesis; required for assembly of an early intermediate in PSII assembly that includes D2 (psbD) and cytochrome b559. The protein is Photosystem II stability/assembly factor HCF136, chloroplastic of Populus euphratica (Euphrates poplar).